The chain runs to 96 residues: MKPIFIVALLFSTCLVNAKPSIDDAEMKREPKPNIINPPCIGCYYQVGNECVYDKFKCGAVRKREPKPNIINPPCIGCYYQVGNECVYDKFKCGAV.

Positions 1–18 are cleaved as a signal peptide; it reads MKPIFIVALLFSTCLVNA. Propeptides lie at residues 19–29 and 30–33; these read KPSIDDAEMKR and EPKP. 2 cysteine pairs are disulfide-bonded: cysteine 40–cysteine 51 and cysteine 43–cysteine 58. 2 consecutive propeptides follow at residues 62–64 and 65–68; these read RKR and EPKP. 2 cysteine pairs are disulfide-bonded: cysteine 75/cysteine 86 and cysteine 78/cysteine 93.

It belongs to the sea anemone BBH family.

The protein resides in the secreted. Its subcellular location is the nematocyst. In terms of biological role, neurotoxin that paralyzes freshwater crabs at high concentration. The sequence is that of U-stichotoxin-Hau2b from Heteractis aurora (Banded sea anemone).